Consider the following 1749-residue polypeptide: Kinesin-like protein KIF13A (1749 aa).

The Kinesin motor domain maps to lysine 5–isoleucine 352. Glycine 102–serine 109 is an ATP binding site. The stretch at asparagine 359–methionine 431 forms a coiled coil. The FHA domain maps to histidine 469–valine 519. Positions leucine 552–lysine 775 form a coiled coil. 2 disordered regions span residues glutamine 633 to serine 652 and isoleucine 834 to leucine 853. Phosphoserine is present on serine 636. Residues serine 1086 to glycine 1126 adopt a coiled-coil conformation. Residue serine 1274 is modified to Phosphoserine. Over residues leucine 1370–proline 1383 the composition is skewed to polar residues. Disordered stretches follow at residues leucine 1370–valine 1402 and threonine 1417–histidine 1436. The segment covering aspartate 1421–cysteine 1430 has biased composition (basic and acidic residues). Phosphoserine occurs at positions 1441, 1477, 1481, 1524, 1600, and 1650. A coiled-coil region spans residues leucine 1475–glutamine 1499. 2 disordered regions span residues cysteine 1584–alanine 1665 and aspartate 1698–arginine 1749. Positions glutamate 1719 to asparagine 1741 are enriched in basic and acidic residues.

The protein belongs to the TRAFAC class myosin-kinesin ATPase superfamily. Kinesin family. In terms of assembly, interacts with AP1G1 and AP1G2. Interacts with ZFYVE26. Interacts with AP2B1.

Its subcellular location is the golgi apparatus membrane. The protein resides in the cytoplasm. It localises to the cytoskeleton. The protein localises to the microtubule organizing center. It is found in the centrosome. Its subcellular location is the midbody. The protein resides in the endosome membrane. In terms of biological role, plus end-directed microtubule-dependent motor protein involved in intracellular transport and regulating various processes such as mannose-6-phosphate receptor (M6PR) transport to the plasma membrane, endosomal sorting during melanosome biogenesis and cytokinesis. During melanosome maturation, required for delivering melanogenic enzymes from recycling endosomes to nascent melanosomes by creating peripheral recycling endosomal subdomains in melanocytes. Also required for the abscission step in cytokinesis: mediates translocation of ZFYVE26, and possibly TTC19, to the midbody during cytokinesis. Mediates the transport of M6PR-containing vesicles from trans-Golgi network to the plasma membrane via direct interaction with the AP-1 complex. The sequence is that of Kinesin-like protein KIF13A (Kif13a) from Mus musculus (Mouse).